The following is a 152-amino-acid chain: Ribosome maturation factor RimP (152 aa).

This sequence belongs to the RimP family.

It is found in the cytoplasm. Required for maturation of 30S ribosomal subunits. The chain is Ribosome maturation factor RimP from Pseudoalteromonas atlantica (strain T6c / ATCC BAA-1087).